A 356-amino-acid polypeptide reads, in one-letter code: Neurogenic differentiation factor 1 (356 aa).

The segment at 1–94 (MTKSYSESGL…GPKKKKMTKA (94 aa)) is disordered. Positions 58–78 (EEEDEDEDLEEEEEEEEEDDD) are enriched in acidic residues. Basic residues predominate over residues 81 to 93 (PKRRGPKKKKMTK). Positions 87–93 (KKKKMTK) match the Nuclear localization signal motif. The bHLH domain occupies 101–153 (LRRMKANARERNRMHGLNAALDNLRKVVPCYSKTQKLSKIETLRLAKNYIWAL). Ser162, Ser259, Ser266, and Ser274 each carry phosphoserine. Ser335 carries the post-translational modification Phosphoserine; by CaMK2.

As to quaternary structure, efficient DNA-binding requires dimerization with another bHLH protein. Heterodimer with TCF3/E47; the heterodimer is inhibited in presence of ID2, but not NR0B2, to E-box element. Interacts with EP300; the interaction is inhibited by NR0B2. Interacts with RREB1. Interacts with ATOH8. In terms of processing, phosphorylated. In islet cells, phosphorylated on Ser-274 upon glucose stimulation; which may be required for nuclear localization. In activated neurons, phosphorylated on Ser-335; which promotes dendritic growth. Phosphorylated by MAPK1; phosphorylation regulates heterodimerization and DNA-binding activities. Phosphorylation on Ser-266 and Ser-274 increases transactivation on the insulin promoter in glucose-stimulated insulinoma cells.

It localises to the cytoplasm. It is found in the nucleus. Functionally, acts as a transcriptional activator: mediates transcriptional activation by binding to E box-containing promoter consensus core sequences 5'-CANNTG-3'. Associates with the p300/CBP transcription coactivator complex to stimulate transcription of the secretin gene as well as the gene encoding the cyclin-dependent kinase inhibitor CDKN1A. Contributes to the regulation of several cell differentiation pathways, like those that promote the formation of early retinal ganglion cells, inner ear sensory neurons, granule cells forming either the cerebellum or the dentate gyrus cell layer of the hippocampus, endocrine islet cells of the pancreas and enteroendocrine cells of the small intestine. Together with PAX6 or SIX3, is required for the regulation of amacrine cell fate specification. Also required for dendrite morphogenesis and maintenance in the cerebellar cortex. Associates with chromatin to enhancer regulatory elements in genes encoding key transcriptional regulators of neurogenesis. This chain is Neurogenic differentiation factor 1 (NEUROD1), found in Homo sapiens (Human).